A 519-amino-acid chain; its full sequence is Trichothecene 15-O-acetyltransferase TRI3 (519 aa).

15-deacetylcalonectrin is bound at residue His-414.

This sequence belongs to the trichothecene O-acetyltransferase family.

Its pathway is sesquiterpene biosynthesis; trichothecene biosynthesis. Functionally, 15-O-acetyltransferase; part of the core gene cluster that mediates the biosynthesis of trichothecenes, a very large family of chemically related bicyclic sesquiterpene compounds acting as mycotoxins, including T2-toxin. The biosynthesis of trichothecenes begins with the cyclization of farnesyl diphosphate to trichodiene and is catalyzed by the trichodiene synthase TRI5. Trichodiene undergoes a series of oxygenations catalyzed by the cytochrome P450 monooxygenase TRI4. TRI4 controls the addition of four oxygens at C-2, C-3, C-11, and the C-12, C-13-epoxide to form the intermediate isotrichotriol. Isotrichotriol then undergoes a non-enzymatic isomerization and cyclization to form isotrichodermol. During this process, the oxygen at the C-2 position becomes the pyran ring oxygen and the hydroxyl group at C-11 is lost. More complex type A trichothecenes are built by modifying isotrichodermol through a series of paired hydroxylation and acetylation or acylation steps. Isotrichodermol is converted to isotrichodermin by the acetyltransferase TRI101. TRI101 encodes a C-3 transacetylase that acts as a self-protection or resistance factor during biosynthesis and that the presence of a free C-3 hydroxyl group is a key component of Fusarium trichothecene phytotoxicity. A second hydroxyl group is added to C-15 by the trichothecene C-15 hydroxylase TRI11, producing 15-decalonectrin, which is then acetylated by TRI3, producing calonectrin. A third hydroxyl group is added at C-4 by the cytochrome P450 monooxygenase TRI13, converting calonectrin to 3,15-diacetoxyspirpenol, which is subsequently acetylated by the acetyltransferase TRI7. A fourth hydroxyl group is added to C-8 by the cytochrome P450 monooxygenase TRI1, followed by the addition of an isovaleryl moiety by TRI16. Finally, the acetyl group is removed from the C-3 position by the trichothecene C-3 esterase TRI8 to produce T-2 toxin. This Fusarium sporotrichioides protein is Trichothecene 15-O-acetyltransferase TRI3.